We begin with the raw amino-acid sequence, 165 residues long: UPF0114 protein ESA_00283 (165 aa).

A run of 3 helical transmembrane segments spans residues 15–35 (LLAP…VKFF), 53–73 (LILL…LVMV), and 136–156 (LMWY…MGYL).

This sequence belongs to the UPF0114 family.

It is found in the cell membrane. The polypeptide is UPF0114 protein ESA_00283 (Cronobacter sakazakii (strain ATCC BAA-894) (Enterobacter sakazakii)).